A 340-amino-acid polypeptide reads, in one-letter code: Ketol-acid reductoisomerase (NADP(+)) (340 aa).

One can recognise a KARI N-terminal Rossmann domain in the interval 1-182 (MRVYYDRDCD…GGGRSGIIET (182 aa)). NADP(+) contacts are provided by residues 24–27 (YGSQ), R48, S51, S53, and 83–86 (DELQ). H108 is an active-site residue. G134 serves as a coordination point for NADP(+). Positions 183–329 (NFREECETDL…AKLREMMPWI (147 aa)) constitute a KARI C-terminal knotted domain. 4 residues coordinate Mg(2+): D191, E195, E227, and E231. Residue S252 coordinates substrate.

This sequence belongs to the ketol-acid reductoisomerase family. The cofactor is Mg(2+).

It catalyses the reaction (2R)-2,3-dihydroxy-3-methylbutanoate + NADP(+) = (2S)-2-acetolactate + NADPH + H(+). It carries out the reaction (2R,3R)-2,3-dihydroxy-3-methylpentanoate + NADP(+) = (S)-2-ethyl-2-hydroxy-3-oxobutanoate + NADPH + H(+). It participates in amino-acid biosynthesis; L-isoleucine biosynthesis; L-isoleucine from 2-oxobutanoate: step 2/4. Its pathway is amino-acid biosynthesis; L-valine biosynthesis; L-valine from pyruvate: step 2/4. Its function is as follows. Involved in the biosynthesis of branched-chain amino acids (BCAA). Catalyzes an alkyl-migration followed by a ketol-acid reduction of (S)-2-acetolactate (S2AL) to yield (R)-2,3-dihydroxy-isovalerate. In the isomerase reaction, S2AL is rearranged via a Mg-dependent methyl migration to produce 3-hydroxy-3-methyl-2-ketobutyrate (HMKB). In the reductase reaction, this 2-ketoacid undergoes a metal-dependent reduction by NADPH to yield (R)-2,3-dihydroxy-isovalerate. The sequence is that of Ketol-acid reductoisomerase (NADP(+)) from Ruegeria sp. (strain TM1040) (Silicibacter sp.).